Here is a 141-residue protein sequence, read N- to C-terminus: uncharacterized protein (141 aa).

Residues 1–39 (MNNNNNNNNNNNNNNNNNNNNNNNNNSYDSNHSSSSYTS) are compositionally biased toward low complexity. The interval 1–48 (MNNNNNNNNNNNNNNNNNNNNNNNNNSYDSNHSSSSYTSENQNREQQF) is disordered. The helical transmembrane segment at 109–129 (FFCKIILVFICLVAIYSLVVI) threads the bilayer.

The protein resides in the membrane. This is an uncharacterized protein from Dictyostelium discoideum (Social amoeba).